Reading from the N-terminus, the 123-residue chain is MADLKQFAEQLVNLTVKEVNELATILKDEYGIEPAAAAVVVAAGGGDGAAEEAQTEFTVVLKDAGASKLAVVKLVKELTGLGLKEAKDVVDGAPSNVKEGVSKEEAEGLKKSLEEAGATVELK.

Positions 96-123 are disordered; the sequence is NVKEGVSKEEAEGLKKSLEEAGATVELK. Residues 100-114 show a composition bias toward basic and acidic residues; the sequence is GVSKEEAEGLKKSLE.

The protein belongs to the bacterial ribosomal protein bL12 family. As to quaternary structure, homodimer. Part of the ribosomal stalk of the 50S ribosomal subunit. Forms a multimeric L10(L12)X complex, where L10 forms an elongated spine to which 2 to 4 L12 dimers bind in a sequential fashion. Binds GTP-bound translation factors.

In terms of biological role, forms part of the ribosomal stalk which helps the ribosome interact with GTP-bound translation factors. Is thus essential for accurate translation. This Flavobacterium johnsoniae (strain ATCC 17061 / DSM 2064 / JCM 8514 / BCRC 14874 / CCUG 350202 / NBRC 14942 / NCIMB 11054 / UW101) (Cytophaga johnsonae) protein is Large ribosomal subunit protein bL12.